Reading from the N-terminus, the 482-residue chain is Malvidin galactosylase UGT88C3 (482 aa).

The Proton acceptor role is filled by H16. Residue D117 is the Charge relay of the active site. UDP-binding residues include S279, W345, A349, H366, N370, S371, and E374.

This sequence belongs to the UDP-glycosyltransferase family.

The protein resides in the endoplasmic reticulum. Its subcellular location is the nucleus. It catalyses the reaction malvidin + UDP-alpha-D-galactose = malvidin 3-O-beta-D-galactoside + UDP + H(+). Its pathway is pigment biosynthesis; anthocyanin biosynthesis. In terms of biological role, UDP-glycosyltransferase which uses UDP-galactose and malvidin as substrates to catalyze the biosynthesis of malvidin 3-O-galactoside, an anthocyanin conferring purple pigmentation. The protein is Malvidin galactosylase UGT88C3 of Oryza sativa subsp. indica (Rice).